The primary structure comprises 255 residues: tRNA uridine(34) hydroxylase (255 aa).

The Rhodanese domain occupies 131 to 225; that stretch reads AAPDTLVLDT…YLEEVPEAQS (95 aa). Cys185 functions as the Cysteine persulfide intermediate in the catalytic mechanism.

The protein belongs to the TrhO family.

It catalyses the reaction uridine(34) in tRNA + AH2 + O2 = 5-hydroxyuridine(34) in tRNA + A + H2O. Functionally, catalyzes oxygen-dependent 5-hydroxyuridine (ho5U) modification at position 34 in tRNAs. The protein is tRNA uridine(34) hydroxylase of Bradyrhizobium diazoefficiens (strain JCM 10833 / BCRC 13528 / IAM 13628 / NBRC 14792 / USDA 110).